The chain runs to 228 residues: U1 small nuclear ribonucleoprotein C (228 aa).

Residues 4–36 (YYCEYCDIYLTHSSPVGRRQHVQGRKHISAKIE) form a Matrin-type zinc finger. Residues 179-190 (LVKDNPNEERNG) are compositionally biased toward basic and acidic residues. Residues 179–228 (LVKDNPNEERNGDSAIANQPSTMHHEEDQDDPANATGGTANNNDNVSINA) are disordered. Positions 211-221 (ANATGGTANNN) are enriched in low complexity.

It belongs to the U1 small nuclear ribonucleoprotein C family. As to quaternary structure, U1 snRNP is composed of the 7 core Sm proteins B/B', D1, D2, D3, E, F and G that assemble in a heptameric protein ring on the Sm site of the small nuclear RNA to form the core snRNP, and at least 3 U1 snRNP-specific proteins U1-70K, U1-A and U1-C. U1-C interacts with U1 snRNA and the 5' splice-site region of the pre-mRNA.

It localises to the nucleus. Component of the spliceosomal U1 snRNP, which is essential for recognition of the pre-mRNA 5' splice-site and the subsequent assembly of the spliceosome. U1-C is directly involved in initial 5' splice-site recognition for both constitutive and regulated alternative splicing. The interaction with the 5' splice-site seems to precede base-pairing between the pre-mRNA and the U1 snRNA. Stimulates commitment or early (E) complex formation by stabilizing the base pairing of the 5' end of the U1 snRNA and the 5' splice-site region. The polypeptide is U1 small nuclear ribonucleoprotein C (Plasmodium knowlesi (strain H)).